A 175-amino-acid chain; its full sequence is FMRFamide-like neuropeptides 1 (175 aa).

Residues 1–21 form the signal peptide; it reads MTLLYQVGLLLLVAATYKVSA. The propeptide occupies 22-68; sequence ECCTPGATSDFCTVFSMLSTMEQNEVMNFIGENCDGDAEVALQKMEK. Tyr76 carries the post-translational modification Tyrosine amide. Positions 79 to 86 are excised as a propeptide; that stretch reads SAAVKSLG. Phenylalanine amide occurs at positions 98, 108, 120, 130, 142, and 154. Positions 157–165 are excised as a propeptide; that stretch reads SFDNFDRES. Phe173 carries the post-translational modification Phenylalanine amide.

Belongs to the FARP (FMRFamide related peptide) family. In terms of processing, may be processed by convertase egl-3. As to expression, each flp gene is expressed in a distinct set of neurons. Flp-1 is expressed in the AVA interneurons, the M5 cholinergic pharyngeal motoneurons, and the AIA, AIY, AVE, AVK, RIG and RMG neurons.

It localises to the secreted. Its function is as follows. Together with flp-18, plays a homeostatic role by acting on the GABAergic neural transmission at neuromuscular junctions to prevent overexcitation of the locomotor circuit. In terms of biological role, inhibits the activity of dissected pharyngeal myogenic muscle system. Functionally, DPNFLRF-amide: Inhibits the activity of dissected pharyngeal myogenic muscle system. Acts as a ligand for the npr-22 receptor in vitro. The sequence is that of FMRFamide-like neuropeptides 1 (flp-1) from Caenorhabditis elegans.